Here is a 74-residue protein sequence, read N- to C-terminus: Coleoptericin (74 aa).

The segment at 1–74 is disordered; the sequence is SLQGGAPNFP…TWHVGGTYRR (74 aa).

It belongs to the coleoptericin family.

Its subcellular location is the secreted. Its function is as follows. Responsible for the anti Gram-negative activity of immune hemolymph of Z.atratus. This chain is Coleoptericin, found in Zophobas atratus (Giant mealworm beetle).